Here is a 183-residue protein sequence, read N- to C-terminus: MKAYLALISAAVIGLAACSQEPAAPAAEATPAGEAPASEAPAAEAAPADAAEAPAAGNCAATVESNDNMQFNTKDIQVSKACKEFTITLKHTGTQPKASMGHNLVIAKAEDMDGVFKDGVGAADTDYVKPDDARVVAHTKLIGGGEESSLTLDPAKLADGDYKFACTFPGHGALMNGKVTLVD.

The first 17 residues, Met-1–Ala-17, serve as a signal peptide directing secretion. Cys-18 carries the N-palmitoyl cysteine lipid modification. Residue Cys-18 is the site of S-diacylglycerol cysteine attachment. Residues Ala-27–Ala-51 form a disordered region. Residues Gly-57–Asp-183 form the Plastocyanin-like domain. Residues His-102, Cys-166, His-171, and Met-175 each contribute to the Cu cation site.

Requires Cu cation as cofactor.

The protein localises to the cell outer membrane. The sequence is that of Outer membrane protein H.8 from Neisseria gonorrhoeae.